The following is a 714-amino-acid chain: Calpain-1 catalytic subunit (714 aa).

Residues 55-354 form the Calpain catalytic domain; the sequence is LFRDEAFPPV…FTRLEICNLT (300 aa). Gln109 and Asp114 together coordinate Ca(2+). Residues Cys115, His272, and Asn296 contribute to the active site. Positions 316, 318, and 323 each coordinate Ca(2+). At Thr354 the chain carries Phosphothreonine. The domain III stretch occupies residues 355 to 526; sequence PDALKSRTIR…KSAGTAELDD (172 aa). The linker stretch occupies residues 527 to 542; it reads QIQANLPDEQVLSEEE. 4 consecutive EF-hand domains span residues 541-576, 585-618, 615-650, and 680-714; these read EEIDENFKALFRQLAGEDMEISVKELRTILNRIISK, FSLESCRSMVNLMDRDGNGKLGLVEFNILWNRIR, NRIRNYLSIFRKFDLDKSGSMSAYEMRMAIESAGFK, and VRLETMFRFFKTLDTDLDGVVTFDLFKWLQLTMFA. A domain IV region spans residues 543-713; it reads IDENFKALFR…LFKWLQLTMF (171 aa). 10 residues coordinate Ca(2+): Asp598, Asp600, Asn602, Lys604, Glu609, Asp628, Asp630, Ser632, Ser634, and Glu639.

This sequence belongs to the peptidase C2 family. Forms a heterodimer with a small (regulatory) subunit (CAPNS1). The cofactor is Ca(2+). Undergoes calcium-induced successive autoproteolytic cleavages that generate a membrane-bound 78 kDa active form and an intracellular 75 kDa active form. Calpastatin reduces with high efficiency the transition from 78 kDa to 75 kDa calpain forms. As to expression, ubiquitous.

It is found in the cytoplasm. The protein localises to the cell membrane. The enzyme catalyses Broad endopeptidase specificity.. Activated by micromolar concentrations of calcium and inhibited by calpastatin. Its function is as follows. Calcium-regulated non-lysosomal thiol-protease which catalyze limited proteolysis of substrates involved in cytoskeletal remodeling and signal transduction. Proteolytically cleaves CTBP1. Cleaves and activates caspase-7 (CASP7). The sequence is that of Calpain-1 catalytic subunit (CAPN1) from Macaca fascicularis (Crab-eating macaque).